A 291-amino-acid polypeptide reads, in one-letter code: Ribosomal RNA small subunit methyltransferase I (291 aa).

This sequence belongs to the methyltransferase superfamily. RsmI family.

The protein localises to the cytoplasm. The catalysed reaction is cytidine(1402) in 16S rRNA + S-adenosyl-L-methionine = 2'-O-methylcytidine(1402) in 16S rRNA + S-adenosyl-L-homocysteine + H(+). Its function is as follows. Catalyzes the 2'-O-methylation of the ribose of cytidine 1402 (C1402) in 16S rRNA. In Neisseria meningitidis serogroup B (strain ATCC BAA-335 / MC58), this protein is Ribosomal RNA small subunit methyltransferase I.